The chain runs to 93 residues: MPRSLKKGPFIDDHVMKKVEKAQESGDRRVIKTWSRRSTISPEMVGLTFAVHNGRKFIPVFVTENMVGHKLGEFSPTRTYYGHAADKKSKAKR.

It belongs to the universal ribosomal protein uS19 family.

Functionally, protein S19 forms a complex with S13 that binds strongly to the 16S ribosomal RNA. The protein is Small ribosomal subunit protein uS19 of Oleidesulfovibrio alaskensis (strain ATCC BAA-1058 / DSM 17464 / G20) (Desulfovibrio alaskensis).